A 354-amino-acid chain; its full sequence is Uroporphyrinogen decarboxylase (354 aa).

Residues 27–31, Asp-77, Tyr-153, Thr-208, and His-326 contribute to the substrate site; that span reads RQAGR.

The protein belongs to the uroporphyrinogen decarboxylase family. In terms of assembly, homodimer.

The protein resides in the cytoplasm. It catalyses the reaction uroporphyrinogen III + 4 H(+) = coproporphyrinogen III + 4 CO2. The protein operates within porphyrin-containing compound metabolism; protoporphyrin-IX biosynthesis; coproporphyrinogen-III from 5-aminolevulinate: step 4/4. Catalyzes the decarboxylation of four acetate groups of uroporphyrinogen-III to yield coproporphyrinogen-III. The protein is Uroporphyrinogen decarboxylase of Neisseria meningitidis serogroup C / serotype 2a (strain ATCC 700532 / DSM 15464 / FAM18).